Consider the following 641-residue polypeptide: Calpain-6 (641 aa).

Residues 26 to 343 (LFCDPTFLPE…FHKLNVCRNV (318 aa)) form the Calpain catalytic domain. Residues 344 to 495 (NNPIFGRKEL…IFSEVPVQLR (152 aa)) are domain III. Residues 498–621 (TLDMPKMSCW…YLRKKGGPTA (124 aa)) form the C2 domain.

Belongs to the peptidase C2 family. As to quaternary structure, interacts (via domain III) with microtubules. Interacts (via domain II) with ARHGEF2 (via the N-terminal zinc finger). As to expression, expressed only in placenta.

The protein resides in the cytoplasm. Its subcellular location is the perinuclear region. The protein localises to the cytoskeleton. It is found in the spindle. Functionally, microtubule-stabilizing protein that may be involved in the regulation of microtubule dynamics and cytoskeletal organization. May act as a regulator of RAC1 activity through interaction with ARHGEF2 to control lamellipodial formation and cell mobility. Does not seem to have protease activity as it has lost the active site residues. This chain is Calpain-6 (CAPN6), found in Homo sapiens (Human).